We begin with the raw amino-acid sequence, 47 residues long: Large ribosomal subunit protein bL27c (47 aa).

Residues 1 to 21 (STKNGRDSNAQRLGVKKYGGE) are disordered.

Belongs to the bacterial ribosomal protein bL27 family.

The protein localises to the plastid. The protein resides in the chloroplast. In Porphyridium purpureum (Red alga), this protein is Large ribosomal subunit protein bL27c (rpl27).